A 333-amino-acid polypeptide reads, in one-letter code: Leucine carboxyl methyltransferase 1 (333 aa).

S-adenosyl-L-methionine contacts are provided by residues Arg79, Gly108, Asp131, Asn180–Val181, and Glu206.

Belongs to the methyltransferase superfamily. LCMT family.

The catalysed reaction is [phosphatase 2A protein]-C-terminal L-leucine + S-adenosyl-L-methionine = [phosphatase 2A protein]-C-terminal L-leucine methyl ester + S-adenosyl-L-homocysteine. In terms of biological role, methylates the carboxyl group of the C-terminal leucine residue of protein phosphatase 2A catalytic subunits to form alpha-leucine ester residues. The sequence is that of Leucine carboxyl methyltransferase 1 (PPM1) from Kluyveromyces lactis (strain ATCC 8585 / CBS 2359 / DSM 70799 / NBRC 1267 / NRRL Y-1140 / WM37) (Yeast).